A 145-amino-acid polypeptide reads, in one-letter code: ATP synthase epsilon chain (145 aa).

The protein belongs to the ATPase epsilon chain family. F-type ATPases have 2 components, CF(1) - the catalytic core - and CF(0) - the membrane proton channel. CF(1) has five subunits: alpha(3), beta(3), gamma(1), delta(1), epsilon(1). CF(0) has three main subunits: a, b and c.

The protein resides in the cell inner membrane. In terms of biological role, produces ATP from ADP in the presence of a proton gradient across the membrane. This Francisella tularensis subsp. tularensis (strain FSC 198) protein is ATP synthase epsilon chain.